The sequence spans 201 residues: Imidazole glycerol phosphate synthase subunit HisH 1 (201 aa).

In terms of domain architecture, Glutamine amidotransferase type-1 spans 1–201; the sequence is MIALIDYKAG…LKLLENFARL (201 aa). Cys80 serves as the catalytic Nucleophile. Active-site residues include His183 and Glu185.

Heterodimer of HisH and HisF.

It localises to the cytoplasm. It catalyses the reaction 5-[(5-phospho-1-deoxy-D-ribulos-1-ylimino)methylamino]-1-(5-phospho-beta-D-ribosyl)imidazole-4-carboxamide + L-glutamine = D-erythro-1-(imidazol-4-yl)glycerol 3-phosphate + 5-amino-1-(5-phospho-beta-D-ribosyl)imidazole-4-carboxamide + L-glutamate + H(+). The catalysed reaction is L-glutamine + H2O = L-glutamate + NH4(+). Its pathway is amino-acid biosynthesis; L-histidine biosynthesis; L-histidine from 5-phospho-alpha-D-ribose 1-diphosphate: step 5/9. IGPS catalyzes the conversion of PRFAR and glutamine to IGP, AICAR and glutamate. The HisH subunit provides the glutamine amidotransferase activity that produces the ammonia necessary to HisF for the synthesis of IGP and AICAR. The chain is Imidazole glycerol phosphate synthase subunit HisH 1 (hisH1) from Campylobacter jejuni subsp. jejuni serotype O:23/36 (strain 81-176).